The sequence spans 74 residues: Holin (74 aa).

2 helical membrane-spanning segments follow: residues 15-35 (VTVV…LYQF) and 37-57 (TTAI…VLGV).

Homomultimer.

The protein resides in the host cell inner membrane. Accumulates harmlessly in the cytoplasmic membrane until it reaches a critical concentration that triggers the formation of micron-scale pores (holes) causing host cell membrane disruption and endolysin escape into the periplasmic space. Determines the precise timing of host cell lysis. Participates with the endolysin protein in the sequential events which lead to the programmed host cell lysis releasing the mature viral particles from the host cell. This is Holin (dph) from Streptococcus pneumoniae (Bacteriophage Dp-1).